Reading from the N-terminus, the 152-residue chain is Protein X (152 aa).

The mitochondrial targeting sequence stretch occupies residues 68–115 (PCALRFTSATWRCMETPMNSVTCLRKRTLGLRTAPPTVMEQYIKDCLF).

This sequence belongs to the orthohepadnavirus protein X family. In terms of assembly, may form homodimer. May interact with host CEBPA, CFLAR, CREB1, DDB1, E4F1, HBXIP, HSPD1/HSP60, NFKBIA, POLR2E and SMAD4. Interacts with host SMC5-SMC6 complex and induces its degradation. Interacts with host TRPC4AP; leading to prevent ubiquitination of TRPC4AP. Interacts with host PLSCR1; this interaction promotes ubiquitination and degradation of HBx and impairs HBx-mediated cell proliferation. Post-translationally, a fraction may be phosphorylated in insect cells and HepG2 cells, a human hepatoblastoma cell line. Phosphorylated in vitro by host protein kinase C or mitogen-activated protein kinase. N-acetylated in insect cells.

The protein resides in the host cytoplasm. Its subcellular location is the host nucleus. It is found in the host mitochondrion. Multifunctional protein that plays a role in silencing host antiviral defenses and promoting viral transcription. Does not seem to be essential for HBV infection. May be directly involved in development of cirrhosis and liver cancer (hepatocellular carcinoma). Most of cytosolic activities involve modulation of cytosolic calcium. The effect on apoptosis is controversial depending on the cell types in which the studies have been conducted. May induce apoptosis by localizing in mitochondria and causing loss of mitochondrial membrane potential. May also modulate apoptosis by binding host CFLAR, a key regulator of the death-inducing signaling complex (DISC). Promotes viral transcription by using the host E3 ubiquitin ligase DDB1 to target the SMC5-SMC6 complex to proteasomal degradation. This host complex would otherwise bind to viral episomal DNA, and prevents its transcription. Moderately stimulates transcription of many different viral and cellular transcription elements. Promoters and enhancers stimulated by HBx contain DNA binding sites for NF-kappa-B, AP-1, AP-2, c-EBP, ATF/CREB, or the calcium-activated factor NF-AT. This chain is Protein X, found in Lagothrix lagotricha (Brown woolly monkey).